The sequence spans 289 residues: NFU1 iron-sulfur cluster scaffold homolog, mitochondrial (289 aa).

The N-terminal 56 residues, 1–56, are a transit peptide targeting the mitochondrion; the sequence is MAKLISYAKGGFLRNTRLTSRAVPQVYQHATSSRGFVHLTSSVAQSSAIHVSTPST. Residues 183-251 form a nifU region; the sequence is IKELLDTRIR…IPEVESVEQV (69 aa). 2 residues coordinate [4Fe-4S] cluster: Cys-220 and Cys-223. Residues 267–289 form a disordered region; the sequence is ERNLKQKDTSSTAPVGIGGGPAN.

It belongs to the NifU family.

It is found in the mitochondrion. Molecular scaffold for [Fe-S] cluster assembly of mitochondrial iron-sulfur proteins. The chain is NFU1 iron-sulfur cluster scaffold homolog, mitochondrial from Drosophila willistoni (Fruit fly).